The sequence spans 229 residues: MAKLLLFLLPAILGLLIPRSAVALGTNYLLSGQTLNTDGHLKNGDFDLVMQNDCNLVLYNGNWQSNTANNGRDCKLTLTDYGDLVIKNRDGSTVWRSRAKSVKGNYAAVLHPDGRLVVFGPSVFKNDPWVPGLNSLAFRNIPFTDNLLFSPQVLYGDGRLTAKNHQLVMQGDCNLVLYGGKYGWQSNTHGNGEHCFLRLNHKGELIIKDDDFKTIWSSSSSSKQGDYVL.

An N-terminal signal peptide occupies residues 1–23 (MAKLLLFLLPAILGLLIPRSAVA). 2 Bulb-type lectin domains span residues 26–131 (TNYL…PWVP) and 145–229 (DNLL…DYVL). Beta-D-mannose-binding positions include 51–55 (QNDCN), tyrosine 59, tryptophan 63, glutamine 64, 170–174 (QGDCN), tyrosine 178, and 182–185 (YGWQ). Residues 51–59 (QNDCNLVLY) carry the Carbohydrate-binding motif 1 motif. Intrachain disulfides connect cysteine 54/cysteine 74 and cysteine 173/cysteine 195. The Carbohydrate-binding motif 2 motif lies at 170–178 (QGDCNLVLY).

Forms heterotetramer of 2 chains 1 and 2 chains 2 arranged as a dimer of chain 1 and chain 2 heterodimers.

The protein localises to the secreted. In terms of biological role, mannose-specific lectin. Shows agglutinating activity towards erythrocytes from rabbit. The chain is Mannose-specific lectin TAR1 from Colocasia esculenta (Wild taro).